Consider the following 268-residue polypeptide: Protein MGF 300-1L (268 aa).

Over 1 to 175 the chain is Cytoplasmic; sequence MVSLTTYCLK…QTFKTFYAKN (175 aa). Residues 176-193 traverse the membrane as a helical segment; that stretch reads YSLSTLYCIFLAIYYKLY. Topologically, residues 194–268 are extracellular; sequence MALRKMVKIY…MYAFSQNNFW (75 aa).

The protein belongs to the asfivirus MGF 300 family.

It localises to the host membrane. In terms of biological role, plays a role in virus cell tropism, and may be required for efficient virus replication in macrophages. The protein is Protein MGF 300-1L of African swine fever virus (isolate Tick/Malawi/Lil 20-1/1983) (ASFV).